The following is a 69-amino-acid chain: U-Asilidin(12)-Dg3b (69 aa).

The signal sequence occupies residues 1-19 (MRFLNIFLFFAVMIAFVSA). A propeptide spanning residues 20–33 (SPVLEEEEIDIEPR) is cleaved from the precursor. 3 disulfide bridges follow: C36-C59, C45-C65, and C49-C67.

It belongs to the asilidin-12 family. As to expression, expressed by the venom gland.

Its subcellular location is the secreted. The recombinant peptide moderately increases Kv11.1/KCNH2/ERG1 currents and shifts the voltage-dependence of the channel activation to hyperpolarised potentials. In vivo, induces neurotoxic effects when injected into insects (tested on L.cuprina and A.domesticus). The polypeptide is U-Asilidin(12)-Dg3b (Dolopus genitalis (Giant Australian assassin fly)).